Here is a 79-residue protein sequence, read N- to C-terminus: Calcium/calmodulin-dependent protein kinase II inhibitor 2 (79 aa).

A disordered region spans residues Met-1–Gly-21. Residues Lys-43 to Lys-69 are inhibitory domain.

This sequence belongs to the CAMK2N family. In terms of assembly, interacts with CAMK2A and CAMK2B in the presence of Ca(2+)/calmodulin or after autophosphorylation.

Its subcellular location is the nucleus. The protein localises to the cytoplasm. The protein resides in the cytosol. It is found in the synapse. Potent and specific cellular inhibitor of CaM-kinase II (CAMK2). Traps Ca(2+)/calmodulin on CAMK2. In Mus musculus (Mouse), this protein is Calcium/calmodulin-dependent protein kinase II inhibitor 2 (Camk2n2).